A 366-amino-acid chain; its full sequence is Ribosomal RNA large subunit methyltransferase M (366 aa).

Residues Ser188, 221 to 224, Asp240, Asp260, and Asp277 each bind S-adenosyl-L-methionine; that span reads CPGG. Residue Lys306 is the Proton acceptor of the active site.

Belongs to the class I-like SAM-binding methyltransferase superfamily. RNA methyltransferase RlmE family. RlmM subfamily. In terms of assembly, monomer.

The protein localises to the cytoplasm. The enzyme catalyses cytidine(2498) in 23S rRNA + S-adenosyl-L-methionine = 2'-O-methylcytidine(2498) in 23S rRNA + S-adenosyl-L-homocysteine + H(+). Functionally, catalyzes the 2'-O-methylation at nucleotide C2498 in 23S rRNA. This Salmonella gallinarum (strain 287/91 / NCTC 13346) protein is Ribosomal RNA large subunit methyltransferase M.